Consider the following 423-residue polypeptide: Protein TylM3 (423 aa).

Residues 1–21 (MNTAAGPTGTAAGGTTAPAAA) show a composition bias toward low complexity. 2 disordered regions span residues 1-26 (MNTA…DLSR) and 117-149 (GSAL…RDDP). Residues 139–149 (RPPDREERDDP) show a composition bias toward basic and acidic residues.

It belongs to the cytochrome P450 family.

It participates in antibiotic biosynthesis; tylosin biosynthesis. In terms of biological role, involved in the biosynthesis of the macrolide antibiotic tylosin derived from the polyketide lactone tylactone. TylM3 is required for the glycosylation of the 5-hydroxyl group of tylactone to yield 5-O-mycaminosytylactone. This is Protein TylM3 from Streptomyces fradiae (Streptomyces roseoflavus).